The sequence spans 425 residues: Serine--tRNA ligase (425 aa).

L-serine is bound at residue 228–230 (TAE). 259-261 (RSE) contributes to the ATP binding site. Glu282 serves as a coordination point for L-serine. Position 346-349 (346-349 (EIAS)) interacts with ATP. Position 382 (Ser382) interacts with L-serine.

It belongs to the class-II aminoacyl-tRNA synthetase family. Type-1 seryl-tRNA synthetase subfamily. In terms of assembly, homodimer. The tRNA molecule binds across the dimer.

Its subcellular location is the cytoplasm. The catalysed reaction is tRNA(Ser) + L-serine + ATP = L-seryl-tRNA(Ser) + AMP + diphosphate + H(+). It catalyses the reaction tRNA(Sec) + L-serine + ATP = L-seryl-tRNA(Sec) + AMP + diphosphate + H(+). It participates in aminoacyl-tRNA biosynthesis; selenocysteinyl-tRNA(Sec) biosynthesis; L-seryl-tRNA(Sec) from L-serine and tRNA(Sec): step 1/1. Catalyzes the attachment of serine to tRNA(Ser). Is also able to aminoacylate tRNA(Sec) with serine, to form the misacylated tRNA L-seryl-tRNA(Sec), which will be further converted into selenocysteinyl-tRNA(Sec). In Rickettsia massiliae (strain Mtu5), this protein is Serine--tRNA ligase.